Here is a 464-residue protein sequence, read N- to C-terminus: Na(+)/H(+) antiporter NhaA 1 (464 aa).

A run of 11 helical transmembrane segments spans residues 41 to 61 (GGLI…SPLA), 85 to 105 (LHHW…GLEL), 121 to 141 (VLPI…YMSL), 150 to 170 (GWGI…ALLA), 180 to 200 (FLVA…AVFY), 207 to 227 (SFLI…MIGI), 234 to 254 (FFVG…ATLA), 329 to 349 (VAFF…IDFG), 363 to 383 (VVFG…WLAI), 399 to 419 (IIGA…IAEL), and 428 to 448 (IIQA…AGYL).

It belongs to the NhaA Na(+)/H(+) (TC 2.A.33) antiporter family.

The protein localises to the cell inner membrane. The enzyme catalyses Na(+)(in) + 2 H(+)(out) = Na(+)(out) + 2 H(+)(in). Na(+)/H(+) antiporter that extrudes sodium in exchange for external protons. The protein is Na(+)/H(+) antiporter NhaA 1 of Saccharophagus degradans (strain 2-40 / ATCC 43961 / DSM 17024).